Consider the following 501-residue polypeptide: Neuronal acetylcholine receptor subunit beta-2 (501 aa).

The N-terminal stretch at 1–25 is a signal peptide; sequence MARCSNSMALLFSFGLLWLCSGVLG. Over 26–238 the chain is Extracellular; that stretch reads TDTEERLVEH…IIRRKPLFYT (213 aa). N-linked (GlcNAc...) asparagine glycosylation is found at Asn-51 and Asn-168. A disulfide bond links Cys-155 and Cys-169. Residues 239 to 259 form a helical membrane-spanning segment; that stretch reads INLIIPCVLITSLAILVFYLP. Topologically, residues 260 to 267 are cytoplasmic; the sequence is SDCGEKMT. A helical membrane pass occupies residues 268–288; the sequence is LCISVLLALTVFLLLISKIVP. Residues 289 to 300 are Extracellular-facing; the sequence is PTSLDVPLVGKY. Residues 301-321 form a helical membrane-spanning segment; that stretch reads LMFTMVLVTFSIVTSVCVLNV. The Cytoplasmic segment spans residues 322–459; it reads HHRSPTTHTM…WKYVAMVIDR (138 aa). Residues 460–480 form a helical membrane-spanning segment; it reads LFLWIFVFVCVFGTIGMFLQP.

The protein belongs to the ligand-gated ion channel (TC 1.A.9) family. Acetylcholine receptor (TC 1.A.9.1) subfamily. Beta-2/CHRNB2 sub-subfamily. In terms of assembly, neuronal AChR is a heteropentamer composed of two different types of subunits: alpha and beta. CHRNB2/Beta-2 subunit can be combined to CHRNA2/alpha-2, CHRNA3/alpha-3 or CHRNA4/alpha-4, CHRNA5/alpha-5, CHRNA6/alpha-6 and CHRNB3/beta-3 to give rise to functional receptors. CHRNA2:CHRNB2 and CHRNA4:CHRNB2 nAChR complexes exist in two subtypes: LS (low agonist sensitivity) with a (CHRNA2/4)3:(CHRNB2)2 and HS (high agonist sensitivity) with a (CHRNA2/4)2:(CHRNB2)3 stoichiometry; the subtypes differ in their subunit binding interfaces which are involved in ligand binding. Cells produce predominantly an (CHRNA4)3:(CHRNB2)2 nAChR. The stoichiometric form (CHRNA4)2:(CHRNB2)3 expression is selectively up-regulated by nicotine and has lower single channel conductance and calcium permeability. Also part of the stoichiometric forms: (CHRNA4:CHRNB2)2:CHRNB3 or (CHRNA6:CHRNB2)2:CHRNB3. Can form heteropentamers with CHRNA7, mainly found in basal forebrain cholinergic neurons. Interacts with RIC3; which is required for proper folding and assembly. Interacts with LYPD6.

Its subcellular location is the synaptic cell membrane. The protein localises to the cell membrane. It carries out the reaction K(+)(in) = K(+)(out). The catalysed reaction is Na(+)(in) = Na(+)(out). It catalyses the reaction Ca(2+)(in) = Ca(2+)(out). With respect to regulation, activated by a myriad of ligands such as acetylcholine, cytisine, nicotine, choline and epibatidine. Channel potentiation by calcium is stoichiometry-selective, CHRNA4:CHRNB2 nACh receptor is achieved by calcium association with topographically distinct sites framed by anionic residues within the CHRNA4 subunit and between the CHRNA4 and CHRNB2 subunits. Oligomeric amyloid-beta protein 42 activates specifially CHRNA7:CHRNB2 nAchRs. nAChR activity is inhibited by the antagonist alpha-conotoxins BuIA, PnIA, PnIC, GID and MII, small disulfide-constrained peptides from cone snails. Its function is as follows. Component of neuronal acetylcholine receptors (nAChRs) that function as pentameric, ligand-gated cation channels with high calcium permeability among other activities. nAChRs are excitatory neurotrasnmitter receptors formed by a collection of nAChR subunits known to mediate synaptic transmission in the nervous system and the neuromuscular junction. Each nAchR subunit confers differential attributes to channel properties, including activation, deactivation and desensitization kinetics, pH sensitivity, cation permeability, and binding to allosteric modulators. CHRNB2 forms heteropentameric neuronal acetylcholine receptors with CHRNA2, CHRNA3, CHRNA4 and CHRNA6, as well as CHRNA5 and CHRNB3 as accesory subunits. Found in two major stoichiometric forms,(CHRNA4)3:(CHRNB2)2 and (CHRNA4)2:(CHRNB2)3, the two stoichiometric forms differ in their unitary conductance, calcium permeability, ACh sensitivity and potentiation by divalent cation. Heteropentameric channels with CHRNA6 and CHRNA4 exhibit high sensitivity to ACh and nicotine and are predominantly expressed in only a few brain areas, including dopaminergic neurons, norepirephrine neurons and cells of the visual system. nAChrs containing CHRNA6 subunits mediate endogenous cholinergic modulation of dopamine and gamma-aminobutyric acid (GABA) release in response to nicotine at nerve terminals. Also forms functional nAChRs with other subunits such as CHRNA7:CHRNB2, mainly expressed in basal forebrain cholinergic neurons. This Mus musculus (Mouse) protein is Neuronal acetylcholine receptor subunit beta-2 (Chrnb2).